We begin with the raw amino-acid sequence, 768 residues long: Cullin-3 (768 aa).

At Ser2 the chain carries N-acetylserine. The interaction with KLHL18 stretch occupies residues 2–41; that stretch reads SNLSKGTGSRKDTKMRIRAFPMTMDEKYVNSIWDLLKNAI. The residue at position 585 (Ser585) is a Phosphoserine. The tract at residues 677–698 is disordered; sequence VAAKQGESDPERKETRQKVDDD. Basic and acidic residues predominate over residues 682–698; the sequence is GESDPERKETRQKVDDD. Residues 698-760 form the Cullin neddylation domain; it reads DRKHEIEAAI…REYLARTPED (63 aa). Lys712 participates in a covalent cross-link: Glycyl lysine isopeptide (Lys-Gly) (interchain with G-Cter in NEDD8).

It belongs to the cullin family. Forms neddylation-dependent homodimers. Component of multiple BCR (BTB-CUL3-RBX1) E3 ubiquitin-protein ligase complexes formed of CUL3, RBX1 and a variable BTB domain-containing protein acting as both, adapter to cullin and substrate recognition subunit. The BCR complex may be active as a heterodimeric complex, in which NEDD8, covalently attached to one CUL3 molecule, binds to the C-terminus of a second CUL3 molecule. Interacts with RBX1, RNF7, CYCE and TIP120A/CAND1. Part of the BCR(SPOP) containing SPOP, and of BCR containing homodimeric SPOPL or the heterodimer formed by SPOP and SPOPL. Part of the probable BCR(KLHL9-KLHL13) complex with BTB domain proteins KLHL9 and KLHL13. Part of the BCR(KLHL41) complex containing KLHL41. Component of the BCR(KLHL12) E3 ubiquitin ligase complex, at least composed of CUL3 and KLHL12 and RBX1. Component of the BCR(KLHL3) E3 ubiquitin ligase complex, at least composed of CUL3 and KLHL3 and RBX1. Part of the BCR(ENC1) complex containing ENC1. Part of a complex consisting of BMI1/PCGF4, CUL3 and SPOP. Part of a complex consisting of BRMS1, CUL3 and SPOP. Component of the BCR(KLHL21) E3 ubiquitin ligase complex, at least composed of CUL3, KLHL21 and RBX1. Component of the BCR(KLHL22) E3 ubiquitin ligase complex, at least composed of CUL3, KLHL22 and RBX1. Component of the BCR(KLHL25) E3 ubiquitin ligase complex, at least composed of CUL3, KLHL25 and RBX1. Part of a complex consisting of MACROH2A1, CUL3 and SPOP. Component of the BCR(KLHL42) E3 ubiquitin ligase complex, at least composed of CUL3 and KLHL42. Component of the BCR(KBTBD8) E3 ubiquitin ligase complex, at least composed of CUL3, KBTBD8 and RBX1. Interacts with KLHL42 (via the BTB domain). Interacts with KATNA1; the interaction is enhanced by KLHL42. Interacts with KCTD5, KLHL9, KLHL11, KLHL13, GAN, ZBTB16, KLHL3, KLHL15, KLHL20, KLHL36, GMCL2, BTBD1. Part of a complex that contains CUL3, RBX1 and GAN. Interacts (via BTB domain) with KLHL17; the interaction regulates surface GRIK2 expression. Interacts with KCTD7. Part of the BCR(GAN) complex containing GAN. Part of the BCR(KEAP1) complex containing KEAP1. vInteracts with KLHL10. Interacts with KAT5 and ATF2. Interacts with KCTD17 in the BCR(KCTD17) E3 ubiquitin ligase complex, at least composed of CUL3, KCTD17 and RBX1. Interacts (when neddylated) with ARIH1; leading to activate the E3 ligase activity of ARIH1. Interacts with COPS9. Interacts with PPP2R5B; this interaction is indirect and mediated through KLHL15-binding and leads to PPP2R5B proteasomal degradation. Interacts with RBBP8/CtIP; this interaction is indirect and mediated through KLHL15-binding and leads to RBBP8 proteasomal degradation. Interacts with KLHL24 in the BCR(KLHL24) E3 ubiquitin ligase complex, composed of CUL3, RBX1 and KLHL24. Interacts with RHOBTB2. Interacts (via BTB domain) with KLHL17; the interaction regulates surface GRIK2 expression. Interacts with AURKA and KLHL18 (via BTB domain). Interacts (unneddylated form) with DCUN1D1, DCUN1D2, DCUN1D3, DCUN1D4 and DCUN1D5; these interactions promote the cullin neddylation. Component of a BCR3 (BTB-CUL3-RBX1) E3 ubiquitin ligase complex, also named Cul3-RING ubiquitin ligase complex CUL3(KBTBD6/7), composed of CUL3, RBX1, KBTBD6 and KBTBD7. Component of the BCR(KBTBD2) E3 ubiquitin ligase complex, at least composed of CUL3, KBTBD2 and RBX1. Interacts with KBTBD2 (via the BTB domain). Component of the BCR(KBTBD4) E3 ubiquitin ligase complex, at least composed of CUL3, KBTBD4 and RBX1. Neddylated. Attachment of NEDD8 is required for the E3 ubiquitin-protein ligase activity of the BCR complex. Deneddylated via its interaction with the COP9 signalosome (CSN) complex.

Its subcellular location is the nucleus. It is found in the golgi apparatus. It localises to the cell projection. The protein localises to the cilium. The protein resides in the flagellum. Its subcellular location is the cytoplasm. It is found in the cytoskeleton. It localises to the spindle. The protein localises to the microtubule organizing center. The protein resides in the centrosome. Its subcellular location is the spindle pole. Its pathway is protein modification; protein ubiquitination. Functionally, core component of multiple cullin-RING-based BCR (BTB-CUL3-RBX1) E3 ubiquitin-protein ligase complexes which mediate the ubiquitination and subsequent proteasomal degradation of target proteins. BCR complexes and ARIH1 collaborate in tandem to mediate ubiquitination of target proteins. As a scaffold protein may contribute to catalysis through positioning of the substrate and the ubiquitin-conjugating enzyme. The E3 ubiquitin-protein ligase activity of the complex is dependent on the neddylation of the cullin subunit and is inhibited by the association of the deneddylated cullin subunit with TIP120A/CAND1. The functional specificity of the BCR complex depends on the BTB domain-containing protein as the substrate recognition component. BCR(KLHL42) is involved in ubiquitination of KATNA1. BCR(SPOP) is involved in ubiquitination of BMI1/PCGF4, BRMS1, MACROH2A1 and DAXX, GLI2 and GLI3. Can also form a cullin-RING-based BCR (BTB-CUL3-RBX1) E3 ubiquitin-protein ligase complex containing homodimeric SPOPL or the heterodimer formed by SPOP and SPOPL; these complexes have lower ubiquitin ligase activity. BCR(KLHL9-KLHL13) controls the dynamic behavior of AURKB on mitotic chromosomes and thereby coordinates faithful mitotic progression and completion of cytokinesis. BCR(KLHL12) is involved in ER-Golgi transport by regulating the size of COPII coats, thereby playing a key role in collagen export, which is required for embryonic stem (ES) cells division: BCR(KLHL12) acts by mediating monoubiquitination of SEC31 (SEC31A or SEC31B). BCR(KLHL3) acts as a regulator of ion transport in the distal nephron; by mediating ubiquitination of WNK4. The BCR(KLHL20) E3 ubiquitin ligase complex is involved in interferon response and anterograde Golgi to endosome transport: it mediates both ubiquitination leading to degradation and 'Lys-33'-linked ubiquitination. The BCR(KLHL21) E3 ubiquitin ligase complex regulates localization of the chromosomal passenger complex (CPC) from chromosomes to the spindle midzone in anaphase and mediates the ubiquitination of AURKB. The BCR(KLHL22) ubiquitin ligase complex mediates monoubiquitination of PLK1, leading to PLK1 dissociation from phosphoreceptor proteins and subsequent removal from kinetochores, allowing silencing of the spindle assembly checkpoint (SAC) and chromosome segregation. The BCR(KLHL22) ubiquitin ligase complex is also responsible for the amino acid-stimulated 'Lys-48' polyubiquitination and proteasomal degradation of DEPDC5. Through the degradation of DEPDC5, releases the GATOR1 complex-mediated inhibition of the TORC1 pathway. The BCR(KLHL25) ubiquitin ligase complex is involved in translational homeostasis by mediating ubiquitination and subsequent degradation of hypophosphorylated EIF4EBP1 (4E-BP1). The BCR(KLHL25) ubiquitin ligase complex is also involved in lipid synthesis by mediating ubiquitination and degradation of ACLY. The BCR(KBTBD8) complex acts by mediating monoubiquitination of NOLC1 and TCOF1, leading to remodel the translational program of differentiating cells in favor of neural crest specification. Involved in ubiquitination of cyclin E and of cyclin D1 (in vitro) thus involved in regulation of G1/S transition. Involved in the ubiquitination of KEAP1, ENC1 and KLHL41. In concert with ATF2 and RBX1, promotes degradation of KAT5 thereby attenuating its ability to acetylate and activate ATM. The BCR(KCTD17) E3 ubiquitin ligase complex mediates ubiquitination and degradation of TCHP, a down-regulator of cilium assembly, thereby inducing ciliogenesis. The BCR(KLHL24) E3 ubiquitin ligase complex mediates ubiquitination of KRT14, controls KRT14 levels during keratinocytes differentiation, and is essential for skin integrity. The BCR(KLHL18) E3 ubiquitin ligase complex mediates the ubiquitination of AURKA leading to its activation at the centrosome which is required for initiating mitotic entry. The BCR(KEAP1) E3 ubiquitin ligase complex acts as a key sensor of oxidative and electrophilic stress by mediating ubiquitination and degradation of NFE2L2/NRF2, a transcription factor regulating expression of many cytoprotective genes. As part of the CUL3(KBTBD6/7) E3 ubiquitin ligase complex functions mediates 'Lys-48' ubiquitination and proteasomal degradation of TIAM1. By controlling the ubiquitination of that RAC1 guanine exchange factors (GEF), regulates RAC1 signal transduction and downstream biological processes including the organization of the cytoskeleton, cell migration and cell proliferation. The BCR(KBTBD4) E3 ubiquitin ligase complex targets CoREST corepressor complex components RCOR1, KDM1A/LSD1 and HDAC2 for proteasomal degradation with RCOR1 likely to be the primary target while degradation of KDM1A and HDAC2 is likely due to their association with RCOR1. It also targets RCOR3, MIER2 and MIER3 for proteasomal degradation as well as associated proteins ZNF217 and RREB1 with degradation being dependent on the presence of an ELM2 domain in the target proteins. The BCR(ARMC5) complex mediates premature transcription termination of transcripts that are unfavorably configured for transcriptional elongation by mediating ubiquitination of Pol II subunit POLR2A. Required for 'Lys-63'-linked ubiquitination of large ribosomal subunit protein MRPL12. This is Cullin-3 (Cul3) from Rattus norvegicus (Rat).